The following is a 378-amino-acid chain: Chaperone protein DnaJ (378 aa).

Positions 6-70 (DYYDVLGVSR…QKRQQYDQFG (65 aa)) constitute a J domain. Residues 137–219 (GKTSEISYSR…CHGKGVKTQK (83 aa)) form a CR-type zinc finger. C150, C153, C167, C170, C193, C196, C207, and C210 together coordinate Zn(2+). 4 CXXCXGXG motif repeats span residues 150-157 (CEVCKGSG), 167-174 (CDKCGGSG), 193-200 (CDKCAGSG), and 207-214 (CHNCHGKG).

The protein belongs to the DnaJ family. In terms of assembly, homodimer. Zn(2+) is required as a cofactor.

The protein resides in the cytoplasm. In terms of biological role, participates actively in the response to hyperosmotic and heat shock by preventing the aggregation of stress-denatured proteins and by disaggregating proteins, also in an autonomous, DnaK-independent fashion. Unfolded proteins bind initially to DnaJ; upon interaction with the DnaJ-bound protein, DnaK hydrolyzes its bound ATP, resulting in the formation of a stable complex. GrpE releases ADP from DnaK; ATP binding to DnaK triggers the release of the substrate protein, thus completing the reaction cycle. Several rounds of ATP-dependent interactions between DnaJ, DnaK and GrpE are required for fully efficient folding. Also involved, together with DnaK and GrpE, in the DNA replication of plasmids through activation of initiation proteins. The chain is Chaperone protein DnaJ from Lactobacillus delbrueckii subsp. bulgaricus (strain ATCC BAA-365 / Lb-18).